The following is a 631-amino-acid chain: Dolichyl-diphosphooligosaccharide--protein glycosyltransferase subunit 2 (631 aa).

Positions 1-22 (MAPPGSSTVFLLALTIIASTWA) are cleaved as a signal peptide. Topologically, residues 23–540 (LTPTHYLTKH…REPEKRPPTV (518 aa)) are lumenal. Asparagine 106 is a glycosylation site (N-linked (GlcNAc...) asparagine). A Glycyl lysine isopeptide (Lys-Gly) (interchain with G-Cter in ubiquitin) cross-link involves residue lysine 154. Residues 541–561 (VSNTFTALILSPLLLLFALWI) traverse the membrane as a helical segment. Residues 562-571 (RIGANVSNFT) lie on the Cytoplasmic side of the membrane. Residues 572-592 (FAPSTIIFHLGHAAMLGLMYV) form a helical membrane-spanning segment. At 593 to 596 (YWTQ) the chain is on the lumenal side. The chain crosses the membrane as a helical span at residues 597–617 (LNMFQTLKYLAILGSVTFLAG). The Cytoplasmic portion of the chain corresponds to 618–631 (NRMLAQQAVKRTAH).

It belongs to the SWP1 family. In terms of assembly, component of the oligosaccharyltransferase (OST) complex. OST exists in two different complex forms which contain common core subunits RPN1, RPN2, OST48, OST4, DAD1 and TMEM258, either STT3A or STT3B as catalytic subunits, and form-specific accessory subunits. STT3A complex assembly occurs through the formation of 3 subcomplexes. Subcomplex 1 contains RPN1 and TMEM258, subcomplex 2 contains the STT3A-specific subunits STT3A, DC2/OSTC, and KCP2 as well as the core subunit OST4, and subcomplex 3 contains RPN2, DAD1, and OST48. The STT3A complex can form stable complexes with the Sec61 complex or with both the Sec61 and TRAP complexes. Interacts with DDI2. Interacts with TMEM35A/NACHO. In terms of tissue distribution, expressed in all tissues tested.

It is found in the endoplasmic reticulum. The protein resides in the endoplasmic reticulum membrane. It participates in protein modification; protein glycosylation. In terms of biological role, subunit of the oligosaccharyl transferase (OST) complex that catalyzes the initial transfer of a defined glycan (Glc(3)Man(9)GlcNAc(2) in eukaryotes) from the lipid carrier dolichol-pyrophosphate to an asparagine residue within an Asn-X-Ser/Thr consensus motif in nascent polypeptide chains, the first step in protein N-glycosylation. N-glycosylation occurs cotranslationally and the complex associates with the Sec61 complex at the channel-forming translocon complex that mediates protein translocation across the endoplasmic reticulum (ER). All subunits are required for a maximal enzyme activity. The protein is Dolichyl-diphosphooligosaccharide--protein glycosyltransferase subunit 2 of Homo sapiens (Human).